The following is a 96-amino-acid chain: Large ribosomal subunit protein eL14 (96 aa).

The protein belongs to the eukaryotic ribosomal protein eL14 family.

The protein is Large ribosomal subunit protein eL14 of Staphylothermus marinus (strain ATCC 43588 / DSM 3639 / JCM 9404 / F1).